The sequence spans 62 residues: Photosystem II reaction center protein Z (62 aa).

Transmembrane regions (helical) follow at residues 8-28 (AVFA…VALA) and 41-61 (FSGV…NSFI).

This sequence belongs to the PsbZ family. In terms of assembly, PSII is composed of 1 copy each of membrane proteins PsbA, PsbB, PsbC, PsbD, PsbE, PsbF, PsbH, PsbI, PsbJ, PsbK, PsbL, PsbM, PsbT, PsbY, PsbZ, Psb30/Ycf12, at least 3 peripheral proteins of the oxygen-evolving complex and a large number of cofactors. It forms dimeric complexes.

The protein localises to the plastid. It localises to the chloroplast thylakoid membrane. In terms of biological role, may control the interaction of photosystem II (PSII) cores with the light-harvesting antenna, regulates electron flow through the 2 photosystem reaction centers. PSII is a light-driven water plastoquinone oxidoreductase, using light energy to abstract electrons from H(2)O, generating a proton gradient subsequently used for ATP formation. The protein is Photosystem II reaction center protein Z of Pinus thunbergii (Japanese black pine).